A 300-amino-acid chain; its full sequence is uncharacterized protein (300 aa).

An N-terminal signal peptide occupies residues 1–19 (MKLKLLLIPLLGSSLLLSA). C20 is lipidated: N-palmitoyl cysteine. C20 carries S-diacylglycerol cysteine lipidation.

Belongs to the MG439/MG440 family.

The protein localises to the cell membrane. This is an uncharacterized protein from Mycoplasma pneumoniae (strain ATCC 29342 / M129 / Subtype 1) (Mycoplasmoides pneumoniae).